We begin with the raw amino-acid sequence, 755 residues long: Primary amine oxidase (755 aa).

Residues 1 to 30 (MANGLKFSPRKTALALAVAVVCAWQSPVFA) form the signal peptide. Substrate contacts are provided by residues 411-422 (YLDSGDYGMGTL) and 493-498 (VGNYDY). Catalysis depends on Asp413, which acts as the Proton acceptor. The active-site Schiff-base intermediate with substrate; via topaquinone is Tyr496. At Tyr496 the chain carries 2',4',5'-topaquinone. Positions 554 and 556 each coordinate Cu cation. 8 residues coordinate Ca(2+): Asp563, Leu564, Asp565, Glu603, Tyr697, Asp700, Glu702, and Asp708. Residue Asp563 participates in Mn(2+) binding. Asp565 provides a ligand contact to Mn(2+). Asp708 is a Mn(2+) binding site. Residue His719 coordinates Cu cation.

The protein belongs to the copper/topaquinone oxidase family. In terms of assembly, homodimer. Requires Cu cation as cofactor. Zn(2+) is required as a cofactor. The cofactor is Ca(2+). It depends on L-topaquinone as a cofactor. Mn(2+) serves as cofactor. Post-translationally, topaquinone (TPQ) is generated by copper-dependent autoxidation of a specific tyrosyl residue.

Its subcellular location is the periplasm. It catalyses the reaction a primary methyl amine + O2 + H2O = an aldehyde + H2O2 + NH4(+). Functionally, active on tyramine, tryptamine, beta-phenethylamine and dopamine. The chain is Primary amine oxidase (maoA) from Klebsiella aerogenes (Enterobacter aerogenes).